The following is a 201-amino-acid chain: LexA repressor (201 aa).

A DNA-binding region (H-T-H motif) is located at residues 29-49 (VREICKAVGLSSTSSVHFHLK). Active-site for autocatalytic cleavage activity residues include Ser125 and Lys162.

Belongs to the peptidase S24 family. Homodimer.

It carries out the reaction Hydrolysis of Ala-|-Gly bond in repressor LexA.. Represses a number of genes involved in the response to DNA damage (SOS response), including recA and lexA. In the presence of single-stranded DNA, RecA interacts with LexA causing an autocatalytic cleavage which disrupts the DNA-binding part of LexA, leading to derepression of the SOS regulon and eventually DNA repair. This is LexA repressor from Clostridium botulinum (strain ATCC 19397 / Type A).